Consider the following 186-residue polypeptide: UPF0301 protein Neut_0448 (186 aa).

This sequence belongs to the UPF0301 (AlgH) family.

The chain is UPF0301 protein Neut_0448 from Nitrosomonas eutropha (strain DSM 101675 / C91 / Nm57).